The primary structure comprises 183 residues: 2-epi-5-epi-valiolone epimerase (183 aa).

In terms of domain architecture, VOC spans A11–L155. Residues H14, E76, H99, and E151 each coordinate a divalent metal cation.

As to quaternary structure, homodimer. Requires a divalent metal cation as cofactor.

It catalyses the reaction 2-epi-5-epi-valiolone = 5-epi-valiolone. The protein operates within antibiotic biosynthesis. Functionally, catalyzes the epimerization of 2-epi-5-epi-valiolone to 5-epi-valiolone. Involved in cetoniacytone A biosynthesis. The protein is 2-epi-5-epi-valiolone epimerase of Actinomyces sp.